Here is a 360-residue protein sequence, read N- to C-terminus: Probable protein phosphatase 2C 54 (360 aa).

Residues 1–39 (MCVEESEGAERLDFGEPAAAAADAGKSKSKSPDELPSPR) form a disordered region. One can recognise a PPM-type phosphatase domain in the interval 65-325 (RSGDWSDIGG…DNLTAVLVSF (261 aa)). Asp109, Gly110, Asp273, and Asp316 together coordinate Mn(2+).

Belongs to the PP2C family. It depends on Mg(2+) as a cofactor. The cofactor is Mn(2+).

It carries out the reaction O-phospho-L-seryl-[protein] + H2O = L-seryl-[protein] + phosphate. The enzyme catalyses O-phospho-L-threonyl-[protein] + H2O = L-threonyl-[protein] + phosphate. This is Probable protein phosphatase 2C 54 from Oryza sativa subsp. japonica (Rice).